The primary structure comprises 508 residues: Photosystem II CP47 reaction center protein (508 aa).

The next 6 helical transmembrane spans lie at 21 to 36, 101 to 115, 140 to 156, 203 to 218, 237 to 252, and 457 to 472; these read SVHI…WAGS, IVFS…IWHW, GIHL…FGAF, IAAG…FHLS, VLSS…AFIV, and SFAL…HGAR.

Belongs to the PsbB/PsbC family. PsbB subfamily. PSII is composed of 1 copy each of membrane proteins PsbA, PsbB, PsbC, PsbD, PsbE, PsbF, PsbH, PsbI, PsbJ, PsbK, PsbL, PsbM, PsbT, PsbX, PsbY, PsbZ, Psb30/Ycf12, at least 3 peripheral proteins of the oxygen-evolving complex and a large number of cofactors. It forms dimeric complexes. Requires Binds multiple chlorophylls. PSII binds additional chlorophylls, carotenoids and specific lipids. as cofactor.

The protein resides in the plastid. It localises to the chloroplast thylakoid membrane. In terms of biological role, one of the components of the core complex of photosystem II (PSII). It binds chlorophyll and helps catalyze the primary light-induced photochemical processes of PSII. PSII is a light-driven water:plastoquinone oxidoreductase, using light energy to abstract electrons from H(2)O, generating O(2) and a proton gradient subsequently used for ATP formation. The chain is Photosystem II CP47 reaction center protein from Amborella trichopoda.